Consider the following 343-residue polypeptide: Glucokinase (343 aa).

Position 21-26 (21-26 (ADVGGT)) interacts with ATP.

The protein belongs to the bacterial glucokinase family.

Its subcellular location is the cytoplasm. It catalyses the reaction D-glucose + ATP = D-glucose 6-phosphate + ADP + H(+). The protein is Glucokinase of Cupriavidus pinatubonensis (strain JMP 134 / LMG 1197) (Cupriavidus necator (strain JMP 134)).